The following is a 149-amino-acid chain: FKBP-type 16 kDa peptidyl-prolyl cis-trans isomerase (149 aa).

Positions 2 to 72 (SESVQSNSAV…FSLEPDAAFG (71 aa)) constitute a PPIase FKBP-type domain.

Belongs to the FKBP-type PPIase family.

It carries out the reaction [protein]-peptidylproline (omega=180) = [protein]-peptidylproline (omega=0). Functionally, PPIases accelerate the folding of proteins. Substrate specificity carried out with 'Suc-Ala-Xaa-Pro-Phe-4-nitroanilide', where Xaa is the amino acid tested, was found to be Phe &gt; Leu &gt;&gt; Ile &gt; Lys = Ala &gt; Trp &gt; His &gt;&gt; Gln. In Escherichia coli O6:H1 (strain CFT073 / ATCC 700928 / UPEC), this protein is FKBP-type 16 kDa peptidyl-prolyl cis-trans isomerase (fkpB).